We begin with the raw amino-acid sequence, 35 residues long: Photosystem II reaction center protein Psb30 (35 aa).

Residues 7 to 27 (VFVQLLLLALIVLAGPAVILL) form a helical membrane-spanning segment.

It belongs to the Psb30/Ycf12 family. PSII is composed of 1 copy each of membrane proteins PsbA, PsbB, PsbC, PsbD, PsbE, PsbF, PsbH, PsbI, PsbJ, PsbK, PsbL, PsbM, PsbT, PsbX, PsbY, PsbZ, Psb30/Ycf12, peripheral proteins PsbO, CyanoQ (PsbQ), PsbU, PsbV and a large number of cofactors. It forms dimeric complexes.

Its subcellular location is the cellular thylakoid membrane. Functionally, a core subunit of photosystem II (PSII), probably helps stabilize the reaction center. This Synechococcus sp. (strain JA-3-3Ab) (Cyanobacteria bacterium Yellowstone A-Prime) protein is Photosystem II reaction center protein Psb30.